Here is a 501-residue protein sequence, read N- to C-terminus: Phenylalanine--tRNA ligase alpha subunit (501 aa).

L-phenylalanine contacts are provided by threonine 340 and phenylalanine 423. Residue glutamate 425 participates in Mg(2+) binding. Phenylalanine 448 is a binding site for L-phenylalanine.

It belongs to the class-II aminoacyl-tRNA synthetase family. Phe-tRNA synthetase alpha subunit type 2 subfamily. As to quaternary structure, tetramer of two alpha and two beta subunits. Requires Mg(2+) as cofactor.

Its subcellular location is the cytoplasm. It catalyses the reaction tRNA(Phe) + L-phenylalanine + ATP = L-phenylalanyl-tRNA(Phe) + AMP + diphosphate + H(+). In Methanococcus maripaludis (strain C5 / ATCC BAA-1333), this protein is Phenylalanine--tRNA ligase alpha subunit.